The chain runs to 396 residues: uncharacterized protein (396 aa).

Helical transmembrane passes span 8–28 (TASGMYINYFFLGMVNIILAS), 44–64 (ISYVIAAIGFGKLLTYGISGV), 73–93 (PLVVASAGIMAVFLVGIPLSP), 97–117 (LAFVFALLAGVANSAMDAGTY), 133–153 (VLVKAFMSVGAALLPLLITFL), 158–178 (MFYGFAFYLPAAVYLLNIIYL), 213–233 (ALIIIGFTSTALFTVSQIWLP), 250–270 (LLSYYSIGSLASVLLLAVLLN), 276–296 (VFITLLYPIITLCTLAVMLTV), 304–324 (ITAFFLGFSTAGVFQITITLM), 338–358 (IVATASSLASILLPIATGLIA), and 363–383 (IAHIFIFDFGIAVIGTAAAAF).

The protein belongs to the major facilitator superfamily.

The protein localises to the cell membrane. This is an uncharacterized protein from Bacillus subtilis (strain 168).